Here is a 215-residue protein sequence, read N- to C-terminus: 3-isopropylmalate dehydratase small subunit (215 aa).

It belongs to the LeuD family. LeuD type 1 subfamily. Heterodimer of LeuC and LeuD.

The enzyme catalyses (2R,3S)-3-isopropylmalate = (2S)-2-isopropylmalate. Its pathway is amino-acid biosynthesis; L-leucine biosynthesis; L-leucine from 3-methyl-2-oxobutanoate: step 2/4. In terms of biological role, catalyzes the isomerization between 2-isopropylmalate and 3-isopropylmalate, via the formation of 2-isopropylmaleate. The protein is 3-isopropylmalate dehydratase small subunit of Acinetobacter baumannii (strain AB307-0294).